The sequence spans 116 residues: Protein Rev (116 aa).

Ser-8 bears the Phosphoserine; by host CK2 mark. The homomultimerization stretch occupies residues 18–26 (LIKSLYQSN). Disordered stretches follow at residues 20–46 (KSLYQSNPPPSPEGTRQARRNRRRRWR) and 84–116 (DSSEDCGTSGTQGVGSPQVLVESPAVLESGAKE). Positions 34–50 (TRQARRNRRRRWRERQR) match the Nuclear localization signal and RNA-binding (RRE) motif. The segment covering 36–46 (QARRNRRRRWR) has biased composition (basic residues). The Nuclear export signal and binding to XPO1 signature appears at 73-84 (LQLPPLERLTLD). Positions 88-98 (DCGTSGTQGVG) are enriched in polar residues. Ser-92 and Ser-99 each carry phosphoserine; by host.

The protein belongs to the HIV-1 REV protein family. Homomultimer; when bound to the RRE. Multimeric assembly is essential for activity and may involve XPO1. Binds to human KPNB1, XPO1, TNPO1, RANBP5 and IPO7. Interacts with the viral Integrase. Interacts with human KHDRBS1. Interacts with human NAP1; this interaction decreases Rev multimerization and stimulates its activity. Interacts with human DEAD-box helicases DDX3 and DDX24; these interactions may serve for viral RNA export to the cytoplasm and packaging, respectively. Interacts with human PSIP1; this interaction may inhibit HIV-1 DNA integration by promoting dissociation of the Integrase-LEDGF/p75 complex. Post-translationally, asymmetrically arginine dimethylated at one site by host PRMT6. Methylation impairs the RNA-binding activity and export of viral RNA from the nucleus to the cytoplasm. Phosphorylated by protein kinase CK2. Presence of, and maybe binding to the N-terminus of the regulatory beta subunit of CK2 is necessary for CK2-mediated Rev's phosphorylation.

It is found in the host nucleus. It localises to the host nucleolus. The protein localises to the host cytoplasm. Its function is as follows. Escorts unspliced or incompletely spliced viral pre-mRNAs (late transcripts) out of the nucleus of infected cells. These pre-mRNAs carry a recognition sequence called Rev responsive element (RRE) located in the env gene, that is not present in fully spliced viral mRNAs (early transcripts). This function is essential since most viral proteins are translated from unspliced or partially spliced pre-mRNAs which cannot exit the nucleus by the pathway used by fully processed cellular mRNAs. Rev itself is translated from a fully spliced mRNA that readily exits the nucleus. Rev's nuclear localization signal (NLS) binds directly to KPNB1/Importin beta-1 without previous binding to KPNA1/Importin alpha-1. KPNB1 binds to the GDP bound form of RAN (Ran-GDP) and targets Rev to the nucleus. In the nucleus, the conversion from Ran-GDP to Ran-GTP dissociates Rev from KPNB1 and allows Rev's binding to the RRE in viral pre-mRNAs. Rev multimerization on the RRE via cooperative assembly exposes its nuclear export signal (NES) to the surface. Rev can then form a complex with XPO1/CRM1 and Ran-GTP, leading to nuclear export of the complex. Conversion from Ran-GTP to Ran-GDP mediates dissociation of the Rev/RRE/XPO1/RAN complex, so that Rev can return to the nucleus for a subsequent round of export. Beside KPNB1, also seems to interact with TNPO1/Transportin-1, RANBP5/IPO5 and IPO7/RANBP7 for nuclear import. The nucleoporin-like HRB/RIP is an essential cofactor that probably indirectly interacts with Rev to release HIV RNAs from the perinuclear region to the cytoplasm. The protein is Protein Rev of Human immunodeficiency virus type 1 group M subtype B (isolate RF/HAT3) (HIV-1).